The following is a 360-amino-acid chain: Protein Wnt-2 (360 aa).

An N-terminal signal peptide occupies residues 1–25 (MNAPLGGIWLWLPLLLTWLTPEVSS). 11 disulfide bridges follow: C76–C87, C127–C135, C137–C157, C206–C220, C208–C215, C278–C309, C294–C304, C308–C348, C324–C339, C326–C336, and C331–C332. A lipid anchor (O-palmitoleoyl serine; by PORCN) is attached at S212. N295 is a glycosylation site (N-linked (GlcNAc...) asparagine).

This sequence belongs to the Wnt family. In terms of processing, palmitoleoylation is required for efficient binding to frizzled receptors. Depalmitoleoylation leads to Wnt signaling pathway inhibition.

The protein localises to the secreted. It is found in the extracellular space. Its subcellular location is the extracellular matrix. In terms of biological role, ligand for members of the frizzled family of seven transmembrane receptors. Functions in the canonical Wnt signaling pathway that results in activation of transcription factors of the TCF/LEF family. In Dasypus novemcinctus (Nine-banded armadillo), this protein is Protein Wnt-2 (WNT2).